A 451-amino-acid polypeptide reads, in one-letter code: MGRRYFGTDGIRGTVGDAPITPDFVLRLGYAAGKVLAGTADVAPGARPTVLIGKDTRVSGYMLEAALEAGFSAAGVDVMLAGPMPTPGVAYLTRALRLSAGVVISASHNPYPDNGIKFFSADGNKLPDDTEAAIEAWLDKPLECAPSDGLGKARRLDDAAGRYIEFCKSTFPAAFDLRGLKLVVDCAHGAAYQVAPHVFHELGADVIPIGVAPNGFNINDGVGATAPDALMRAVRANRADLGIALDGDADRLQIVDASGRLYNGDELLYVLVQDRIATDGKVEGAVGTLMTNLAVEVALQRAGVQFVRAAVGDRYVLEKLREHGWQLGAEGSGHILSLDRHSTGDGIVSALLVLAALKRSGKTLAQMLDGVTLFPQKLINVRMKPGADWKDSASIRAAIETAEAALAGSGRVLIRASGTEPVLRVMVEAQQAADATRHAEAIAEAVRAATA.

Ser107 (phosphoserine intermediate) is an active-site residue. The Mg(2+) site is built by Ser107, Asp246, Asp248, and Asp250. Ser107 carries the post-translational modification Phosphoserine.

Belongs to the phosphohexose mutase family. Mg(2+) serves as cofactor. Post-translationally, activated by phosphorylation.

It carries out the reaction alpha-D-glucosamine 1-phosphate = D-glucosamine 6-phosphate. Catalyzes the conversion of glucosamine-6-phosphate to glucosamine-1-phosphate. This chain is Phosphoglucosamine mutase, found in Burkholderia multivorans (strain ATCC 17616 / 249).